The sequence spans 555 residues: CTP synthase (555 aa).

Positions Met-1–Leu-267 are amidoligase domain. Ser-13 lines the CTP pocket. Position 13 (Ser-13) interacts with UTP. ATP is bound by residues Ser-14–Ile-19 and Asp-71. 2 residues coordinate Mg(2+): Asp-71 and Glu-141. Residues Asp-148–Glu-150, Lys-188–Gln-193, and Lys-224 each bind CTP. UTP contacts are provided by residues Lys-188–Gln-193 and Lys-224. The region spanning Lys-292–Ser-534 is the Glutamine amidotransferase type-1 domain. Gly-354 is a binding site for L-glutamine. Residue Cys-381 is the Nucleophile; for glutamine hydrolysis of the active site. Residues Leu-382–Gln-385, Glu-405, and Arg-462 contribute to the L-glutamine site. Residues His-507 and Glu-509 contribute to the active site. Residues Pro-536–Gln-555 form a disordered region. Residues Ile-546–Gln-555 show a composition bias toward basic and acidic residues.

This sequence belongs to the CTP synthase family. In terms of assembly, homotetramer.

The catalysed reaction is UTP + L-glutamine + ATP + H2O = CTP + L-glutamate + ADP + phosphate + 2 H(+). The enzyme catalyses L-glutamine + H2O = L-glutamate + NH4(+). It catalyses the reaction UTP + NH4(+) + ATP = CTP + ADP + phosphate + 2 H(+). Its pathway is pyrimidine metabolism; CTP biosynthesis via de novo pathway; CTP from UDP: step 2/2. With respect to regulation, allosterically activated by GTP, when glutamine is the substrate; GTP has no effect on the reaction when ammonia is the substrate. The allosteric effector GTP functions by stabilizing the protein conformation that binds the tetrahedral intermediate(s) formed during glutamine hydrolysis. Inhibited by the product CTP, via allosteric rather than competitive inhibition. Its function is as follows. Catalyzes the ATP-dependent amination of UTP to CTP with either L-glutamine or ammonia as the source of nitrogen. Regulates intracellular CTP levels through interactions with the four ribonucleotide triphosphates. This Prochlorococcus marinus (strain NATL1A) protein is CTP synthase.